The following is a 439-amino-acid chain: Serine/threonine-protein kinase 2 (439 aa).

Residues 87–439 (NDDFYHISTG…IFSDWINGRN (353 aa)) form the Protein kinase domain. ATP is bound by residues 93 to 101 (ISTGGYGIV) and Lys117. Asp307 (proton acceptor) is an active-site residue.

The protein belongs to the protein kinase superfamily. Ser/Thr protein kinase family. Post-translationally, phosphorylated in vivo. Autophosphorylated in vitro.

The protein localises to the host endoplasmic reticulum. The protein resides in the host endoplasmic reticulum-Golgi intermediate compartment. The enzyme catalyses L-seryl-[protein] + ATP = O-phospho-L-seryl-[protein] + ADP + H(+). It carries out the reaction L-threonyl-[protein] + ATP = O-phospho-L-threonyl-[protein] + ADP + H(+). Its function is as follows. Essential serine-protein kinase involved in the early stage of virion morphogenesis. This Monkeypox virus protein is Serine/threonine-protein kinase 2 (OPG054).